Consider the following 341-residue polypeptide: 5-formaminoimidazole-4-carboxamide-1-(beta)-D-ribofuranosyl 5'-monophosphate synthetase (341 aa).

5-amino-1-(5-phospho-beta-D-ribosyl)imidazole-4-carboxamide contacts are provided by histidine 10 and threonine 77. The ATP-grasp domain maps to aspartate 106–isoleucine 317. ATP is bound by residues aspartate 132 to tyrosine 188 and glutamate 210. Asparagine 238 contributes to the 5-amino-1-(5-phospho-beta-D-ribosyl)imidazole-4-carboxamide binding site. Residues glutamate 277 and glutamate 290 each contribute to the Mg(2+) site.

Belongs to the phosphohexose mutase family. It depends on Mg(2+) as a cofactor. Requires Mn(2+) as cofactor.

It catalyses the reaction 5-amino-1-(5-phospho-beta-D-ribosyl)imidazole-4-carboxamide + formate + ATP = 5-formamido-1-(5-phospho-D-ribosyl)imidazole-4-carboxamide + ADP + phosphate. It participates in purine metabolism; IMP biosynthesis via de novo pathway; 5-formamido-1-(5-phospho-D-ribosyl)imidazole-4-carboxamide from 5-amino-1-(5-phospho-D-ribosyl)imidazole-4-carboxamide (formate route): step 1/1. In terms of biological role, catalyzes the ATP- and formate-dependent formylation of 5-aminoimidazole-4-carboxamide-1-beta-d-ribofuranosyl 5'-monophosphate (AICAR) to 5-formaminoimidazole-4-carboxamide-1-beta-d-ribofuranosyl 5'-monophosphate (FAICAR) in the absence of folates. The polypeptide is 5-formaminoimidazole-4-carboxamide-1-(beta)-D-ribofuranosyl 5'-monophosphate synthetase (Cenarchaeum symbiosum (strain A)).